The primary structure comprises 908 residues: MSNNKIIESLAILYLNNYINDNDIYSLSLINREFHINIIKDDYFYSTINKNYLFLYIKIFKLLSIKVKLNPNWINIINNNNNINNNNNNNNNNNNNNNNNNNNKIKLIKNNFSVISERLNFLIQCKFNLHRYLDNNDLFITILRGEKLSTLDRIICFSIIYSQDQILLFLLNFILSNINCNNNNNNNNNNNNNNNNNNISNISNSNRLLANNSYNIQFNQQIPTQNELINLNKCLQFSTSTTTTTTTTMVPPFNENILKVYPIYFAIVKVIGGGSLVRFLLSILPNVYNITNVNCKLPITNRSALFYSTTREMTLLLLQLGCNIHDMDYKGMLPIHYHSLNGHVDVVKCLIDDSTINALDQSNNTPLNLASLSGNLSLAKILLNSGARLSIDNLNGRYPIHNACVNGNIDLIRYFLELYSKMNSTTLLPSTTTTTTTTTTTMTTTTTTAITTTTATTIQNNSNNLTNSNSSSVGGLRISNGGNTQQQSIQIPDKENNTPIDLLVLNNHFTIAIELLKYEGYIVGKEEFNFKTARKIGAGAFGDVYLVEWRNKNVAVKRVKIEKILESGKSYQWIRDKFILEAVLMVKLSNFSSFVKLYATCIEEKELLLVLEFCDNGSLYTILNTIPIGGAGANNNNNNNNNNDIIQSLPSINTLSLNIANGMNYLHSLKPQIIHRDLTSQNILIDRNGIAKIADFGISRFKNDIGDKTMTSIGNPRFRSPEVTKGQKYSEKVDVFGFGMILYEMFTRRVPFHDYEQIAASFKIANAERPPLPQTIDHRWSNLIQICWDQNPNNRPSFDQILTIIQNLPIANIPKFLVPLQQNQNQIQNQNQNQNQNNGKLDLSTSSSSITNLNNAVTAKLSLSTSGGLFSGDSDYTVGTCSGYDIGYDNDGDIIDYSSDQNDSDLYD.

Over 1 to 153 (MSNNKIIESL…RGEKLSTLDR (153 aa)) the chain is Extracellular. Residues 154-174 (IICFSIIYSQDQILLFLLNFI) form a helical membrane-spanning segment. Over 175–908 (LSNINCNNNN…SDQNDSDLYD (734 aa)) the chain is Cytoplasmic. 5 ANK repeats span residues 258 to 289 (LKVY…NVYN), 300 to 326 (TNRS…NIHD), 330 to 361 (KGML…ALDQ), 362 to 391 (SNNT…RLSI), and 395 to 424 (NGRY…KMNS). The span at 461-472 (NSNNLTNSNSSS) shows a compositional bias: low complexity. The disordered stretch occupies residues 461-491 (NSNNLTNSNSSSVGGLRISNGGNTQQQSIQI). Over residues 480–490 (NGGNTQQQSIQ) the composition is skewed to polar residues. Residues 495–524 (ENNTPIDLLVLNNHFTIAIELLKYEGYIVG) form an ANK 6 repeat. One can recognise a Protein kinase domain in the interval 530–817 (FKTARKIGAG…LPIANIPKFL (288 aa)). ATP contacts are provided by residues 536–544 (IGAGAFGDV) and Lys-557. The active-site Proton acceptor is the Asp-677.

The protein belongs to the protein kinase superfamily. TKL Ser/Thr protein kinase family.

The protein resides in the membrane. The catalysed reaction is L-seryl-[protein] + ATP = O-phospho-L-seryl-[protein] + ADP + H(+). The enzyme catalyses L-threonyl-[protein] + ATP = O-phospho-L-threonyl-[protein] + ADP + H(+). This Dictyostelium discoideum (Social amoeba) protein is Probable serine/threonine-protein kinase DDB_G0278521.